A 128-amino-acid chain; its full sequence is uncharacterized protein (128 aa).

Helical transmembrane passes span 5 to 25 (ILAL…YSMM), 27 to 47 (PVLV…PLFL), 60 to 80 (QLWW…FIGL), and 87 to 107 (SAVT…HFFF). The region spanning 9-110 (LIWSSSLIVG…FVGHFFFKTK (102 aa)) is the EamA domain.

The protein localises to the cell membrane. This is an uncharacterized protein from Haemophilus influenzae (strain ATCC 51907 / DSM 11121 / KW20 / Rd).